Consider the following 930-residue polypeptide: MPRAPHFMPLLLLLLLLSLPHTQAAFPQDPLPLLISDLQGTSPLSWFRGLEDDAVAAELGLDFQRFLTLNRTLLVAARDHVFSFDLQAEEEGEGLVPNKYLTWRSQDVENCAVRGKLTDECYNYIRVLVPWDSQTLLACGTNSFSPVCRSYGITSLQQEGEELSGQARCPFDATQSNVAIFAEGSLYSATAADFQASDAVVYRSLGPQPPLRSAKYDSKWLREPHFVQALEHGDHVYFFFREVSVEDARLGRVQFSRVARVCKRDMGGSPRALDRHWTSFLKLRLNCSVPGDSTFYFDVLQALTGPVNLHGRSALFGVFTTQTNSIPGSAVCAFYLDEIERGFEGKFKEQRSLDGAWTPVSEDRVPSPRPGSCAGVGGAALFSSSRDLPDDVLTFIKAHPLLDPAVPPVTHQPLLTLTSRALLTQVAVDGMAGPHSNITVMFLGSNDGTVLKVLTPGGRSGGPEPILLEEIDAYSPARCSGKRTAQTARRIIGLELDTEGHRLFVAFSGCIVYLPLSRCARHGACQRSCLASQDPYCGWHSSRGCVDIRGSGGTDVDQAGNQESMEHGDCQDGATGSQSGPGDSAYGVRRDLPPASASRSVPIPLLLASVAAAFALGASVSGLLVSCACRRAHRRRGKDIETPGLPRPLSLRSLARLHGGGPEPPPPSKDGDAVQTPQLYTTFLPPPEGVPPPELACLPTPESTPELPVKHLRAAGDPWEWNQNRNNAKEGPGRSRGGHAAGGPAPRVLVRPPPPGCPGQAVEVTTLEELLRYLHGPQPPRKGAEPPAPLTSRALPPEPAPALLGGPSPRPHECASPLRLDVPPEGRCASAPARPALSAPAPRLGVGGGRRLPFSGHRAPPALLTRVPSGGPSRYSGGPGKHLLYLGRPEGYRGRALKRVDVEKPQLSLKPPLVGPSSRQAVPNGGRFNF.

Positions 1–24 are cleaved as a signal peptide; it reads MPRAPHFMPLLLLLLLLSLPHTQA. At 25 to 604 the chain is on the extracellular side; it reads AFPQDPLPLL…ASASRSVPIP (580 aa). The 487-residue stretch at 30–516 folds into the Sema domain; that stretch reads PLPLLISDLQ…FSGCIVYLPL (487 aa). Asparagine 70 carries an N-linked (GlcNAc...) asparagine glycan. 4 disulfides stabilise this stretch: cysteine 111–cysteine 121, cysteine 139–cysteine 148, cysteine 262–cysteine 373, and cysteine 287–cysteine 332. Asparagine 286 is a glycosylation site (N-linked (GlcNAc...) asparagine). N-linked (GlcNAc...) asparagine glycosylation occurs at asparagine 437. Intrachain disulfides connect cysteine 479-cysteine 510, cysteine 519-cysteine 537, cysteine 525-cysteine 570, and cysteine 529-cysteine 545. A disordered region spans residues 554–593; that stretch reads TDVDQAGNQESMEHGDCQDGATGSQSGPGDSAYGVRRDLP. A helical transmembrane segment spans residues 605-625; sequence LLLASVAAAFALGASVSGLLV. Residues 626–930 lie on the Cytoplasmic side of the membrane; sequence SCACRRAHRR…AVPNGGRFNF (305 aa). Disordered stretches follow at residues 654 to 674, 716 to 761, 775 to 882, and 908 to 930; these read LARL…GDAV, GDPW…PGQA, HGPQ…PGKH, and SLKP…RFNF. Low complexity predominate over residues 829-844; that stretch reads ASAPARPALSAPAPRL.

The protein belongs to the semaphorin family. In adult tissues, expressed only in skeletal muscle.

The protein localises to the cell membrane. Shows growth cone collapsing activity on dorsal root ganglion (DRG) neurons in vitro. May be a stop signal for the DRG neurons in their target areas, and possibly also for other neurons. May also be involved in the maintenance and remodeling of neuronal connections. The chain is Semaphorin-6C (SEMA6C) from Homo sapiens (Human).